Reading from the N-terminus, the 274-residue chain is Fatty-acid O-methyltransferase (274 aa).

This sequence belongs to the methyltransferase superfamily.

It catalyses the reaction a fatty acid + S-adenosyl-L-methionine = a fatty acid methyl ester + S-adenosyl-L-homocysteine. O-methyltransferase that modifies the hydroxy group of the fatty acids. Oleate is the most effective fatty acid acceptor. The polypeptide is Fatty-acid O-methyltransferase (mtf2) (Mycolicibacterium smegmatis (strain ATCC 700084 / mc(2)155) (Mycobacterium smegmatis)).